Reading from the N-terminus, the 415-residue chain is tRNA(Ile2) 2-agmatinylcytidine synthetase TiaS (415 aa).

The protein belongs to the TiaS family.

It is found in the cytoplasm. The enzyme catalyses cytidine(34) in tRNA(Ile2) + agmatine + ATP + H2O = 2-agmatinylcytidine(34) in tRNA(Ile2) + AMP + 2 phosphate + 2 H(+). Functionally, ATP-dependent agmatine transferase that catalyzes the formation of 2-agmatinylcytidine (agm2C) at the wobble position (C34) of tRNA(Ile2), converting the codon specificity from AUG to AUA. The sequence is that of tRNA(Ile2) 2-agmatinylcytidine synthetase TiaS from Methanocorpusculum labreanum (strain ATCC 43576 / DSM 4855 / Z).